Reading from the N-terminus, the 116-residue chain is Selenoprotein H (116 aa).

K20 is modified (N6-acetyllysine). Residues 35 to 38 (CTSU) constitute a cross-link (cysteinyl-selenocysteine (Cys-Sec); redox-active). U38 is a non-standard amino acid (selenocysteine).

This sequence belongs to the SelWTH family.

In terms of biological role, may be involved in a redox-related process. The protein is Selenoprotein H of Mus musculus (Mouse).